The following is an 84-amino-acid chain: Small ribosomal subunit protein bS18 (84 aa).

It belongs to the bacterial ribosomal protein bS18 family. As to quaternary structure, part of the 30S ribosomal subunit. Forms a tight heterodimer with protein bS6.

Binds as a heterodimer with protein bS6 to the central domain of the 16S rRNA, where it helps stabilize the platform of the 30S subunit. This is Small ribosomal subunit protein bS18 from Clostridium kluyveri (strain NBRC 12016).